The sequence spans 317 residues: Electron transfer flavoprotein subunit alpha (317 aa).

This sequence belongs to the ETF alpha-subunit/FixB family. As to quaternary structure, heterodimer of an alpha and a beta subunit. Requires FAD as cofactor.

Its subcellular location is the cytoplasm. It participates in lipid metabolism; butanoate metabolism. In terms of biological role, part of an electron transfer flavoprotein involved in syntrophic growth of S.wolfei with butyrate. Probably receives electrons from butyryl-CoA dehydrogenases, and transfers them to the membrane-bound quinone oxidoreductase Swol_0698. This is Electron transfer flavoprotein subunit alpha from Syntrophomonas wolfei subsp. wolfei (strain DSM 2245B / Goettingen).